A 243-amino-acid polypeptide reads, in one-letter code: Carboxy-S-adenosyl-L-methionine synthase (243 aa).

S-adenosyl-L-methionine is bound by residues Tyr-40, 65-67 (GCS), 90-91 (DN), 118-119 (DI), Asn-133, and Arg-200.

Belongs to the class I-like SAM-binding methyltransferase superfamily. Cx-SAM synthase family. As to quaternary structure, homodimer.

It catalyses the reaction prephenate + S-adenosyl-L-methionine = carboxy-S-adenosyl-L-methionine + 3-phenylpyruvate + H2O. Its function is as follows. Catalyzes the conversion of S-adenosyl-L-methionine (SAM) to carboxy-S-adenosyl-L-methionine (Cx-SAM). The polypeptide is Carboxy-S-adenosyl-L-methionine synthase (Shewanella sp. (strain W3-18-1)).